The sequence spans 177 residues: HVA22-like protein a (177 aa).

Transmembrane regions (helical) follow at residues 18-38 (VLAGPVVSLVYPLYASVQAIE), 47-67 (QWLTYWVLYSLLTLIELTFAK), and 68-88 (LIEWLPIWSYMKLILTCWLVI).

The protein belongs to the DP1 family. In terms of tissue distribution, predominantly expressed in flower buds and stem.

Its subcellular location is the membrane. This is HVA22-like protein a (HVA22A) from Arabidopsis thaliana (Mouse-ear cress).